A 512-amino-acid chain; its full sequence is Probable anion transporter 3, chloroplastic (512 aa).

Residues 1 to 44 constitute a chloroplast transit peptide; that stretch reads MATVGSLKPLHHSSCSSSFPRNPIVNRKALLGFVFDSARKNQIR. 12 helical membrane passes run 102 to 124, 139 to 159, 167 to 187, 191 to 211, 228 to 248, 250 to 270, 324 to 344, 359 to 379, 396 to 416, 422 to 442, 462 to 482, and 486 to 506; these read VILT…VAVV, VVQS…GALV, VLAW…WAAA, LALL…MPSM, VGIS…LTPL, LSSI…LLWV, WAII…LSWM, AAWF…YAGA, KIMQ…LNFA, AAVF…GFLL, AGTL…QWLG, and AFLT…LLFA.

Belongs to the major facilitator superfamily. Sodium/anion cotransporter (TC 2.A.1.14) family. As to expression, expressed in roots.

It localises to the plastid. It is found in the chloroplast membrane. Functionally, inorganic phosphate and probable anion transporter. The sequence is that of Probable anion transporter 3, chloroplastic (ANTR3) from Arabidopsis thaliana (Mouse-ear cress).